The sequence spans 187 residues: Orotate phosphoribosyltransferase (187 aa).

Residues R98, K99, K102, H104, and 128-136 contribute to the 5-phospho-alpha-D-ribose 1-diphosphate site; that span reads EDVTTTGGS. Orotate contacts are provided by T132 and R160.

The protein belongs to the purine/pyrimidine phosphoribosyltransferase family. PyrE subfamily. Homodimer. Mg(2+) is required as a cofactor.

It carries out the reaction orotidine 5'-phosphate + diphosphate = orotate + 5-phospho-alpha-D-ribose 1-diphosphate. The protein operates within pyrimidine metabolism; UMP biosynthesis via de novo pathway; UMP from orotate: step 1/2. Catalyzes the transfer of a ribosyl phosphate group from 5-phosphoribose 1-diphosphate to orotate, leading to the formation of orotidine monophosphate (OMP). This is Orotate phosphoribosyltransferase from Rhodopseudomonas palustris (strain ATCC BAA-98 / CGA009).